Consider the following 247-residue polypeptide: 5-hydroxytryptamine receptor 2A (247 aa).

Lysine 1 is a topological domain (extracellular). A helical transmembrane segment spans residues 2–26; the sequence is LCAIWIYLDVLFSTASIMHLCAISL. Cysteine 3 and cysteine 82 are joined by a disulfide. Position 10 (aspartate 10) interacts with serotonin. A DRY motif; important for ligand-induced conformation changes motif is present at residues 27–29; sequence DRY. At 27–46 the chain is on the cytoplasmic side; that stretch reads DRYVAIQNPIHHSRFNSRTK. The helical transmembrane segment at 47 to 70 threads the bilayer; it reads AFLKIIAVWTISVGISMPVPVFGL. The Extracellular portion of the chain corresponds to 71-87; sequence QDDSKVFKEGSCLLADD. The helical transmembrane segment at 88-113 threads the bilayer; the sequence is NFVLIGSFVAFFIPLTIMVITYFLTI. At 114–177 the chain is on the cytoplasmic side; that stretch reads KSLQKEATLC…QSISNEQKAC (64 aa). Serine 135 carries the post-translational modification Phosphoserine. The helical transmembrane segment at 178–203 threads the bilayer; sequence KVLGIVFFLFVVMWCPFFVTNIMAVI. Asparagine 198 contributes to the serotonin binding site. The cysteines at positions 204 and 208 are disulfide-linked. The Extracellular segment spans residues 204 to 211; sequence CKESCNED. The chain crosses the membrane as a helical span at residues 212 to 237; that stretch reads VIGALLNVFVWIGYLSSAVNPLVYTL. The short motif at 231-235 is the NPxxY motif; important for ligand-induced conformation changes and signaling element; the sequence is NPLVY. Residues 238 to 247 are Cytoplasmic-facing; the sequence is FNKTYRSAFA.

This sequence belongs to the G-protein coupled receptor 1 family. Interacts (via C-terminus) with MPDZ and PATJ. May interact (via C-terminus) with MPP3, PRDX6, DLG4, DLG1, CASK, APBA1 and MAGI2. Interacts with GRM2 and DRD2; this may affect signaling. Detected in adult intestine, especially in mucosal epithelium, longitudinal and circular layers of muscularis externa and myenteric plexuses. Highly expressed in Paneth cells, and detected at lower levels in enterocytes (at protein level).

It is found in the cell membrane. The protein resides in the cell projection. The protein localises to the dendrite. It localises to the axon. Its subcellular location is the cytoplasmic vesicle. It is found in the membrane. The protein resides in the caveola. The protein localises to the presynapse. With respect to regulation, G-protein coupled receptor activity is regulated by lipids: oleamide increases HTR2A-mediated activity. G-protein coupled receptor for 5-hydroxytryptamine (serotonin). Also functions as a receptor for various drugs and psychoactive substances, including mescaline, psilocybin, 1-(2,5-dimethoxy-4-iodophenyl)-2-aminopropane (DOI) and lysergic acid diethylamide (LSD). Ligand binding causes a conformation change that triggers signaling via guanine nucleotide-binding proteins (G proteins) and modulates the activity of downstream effectors. HTR2A is coupled to G(q)/G(11) G alpha proteins and activates phospholipase C-beta, releasing diacylglycerol (DAG) and inositol 1,4,5-trisphosphate (IP3) second messengers that modulate the activity of phosphatidylinositol 3-kinase and promote the release of Ca(2+) ions from intracellular stores, respectively. Beta-arrestin family members inhibit signaling via G proteins and mediate activation of alternative signaling pathways. Affects neural activity, perception, cognition and mood. Plays a role in the regulation of behavior, including responses to anxiogenic situations and psychoactive substances. Plays a role in intestinal smooth muscle contraction, and may play a role in arterial vasoconstriction. The sequence is that of 5-hydroxytryptamine receptor 2A (HTR2A) from Cavia porcellus (Guinea pig).